The following is a 264-amino-acid chain: Acyl-[acyl-carrier-protein]--UDP-N-acetylglucosamine O-acyltransferase (264 aa).

This sequence belongs to the transferase hexapeptide repeat family. LpxA subfamily. Homotrimer.

The protein localises to the cytoplasm. It carries out the reaction a (3R)-hydroxyacyl-[ACP] + UDP-N-acetyl-alpha-D-glucosamine = a UDP-3-O-[(3R)-3-hydroxyacyl]-N-acetyl-alpha-D-glucosamine + holo-[ACP]. It functions in the pathway glycolipid biosynthesis; lipid IV(A) biosynthesis; lipid IV(A) from (3R)-3-hydroxytetradecanoyl-[acyl-carrier-protein] and UDP-N-acetyl-alpha-D-glucosamine: step 1/6. Functionally, involved in the biosynthesis of lipid A, a phosphorylated glycolipid that anchors the lipopolysaccharide to the outer membrane of the cell. This is Acyl-[acyl-carrier-protein]--UDP-N-acetylglucosamine O-acyltransferase from Rickettsia africae (strain ESF-5).